The following is a 358-amino-acid chain: UDP-N-acetylglucosamine--N-acetylmuramyl-(pentapeptide) pyrophosphoryl-undecaprenol N-acetylglucosamine transferase (358 aa).

Residues 11–13, asparagine 120, arginine 161, serine 188, and glutamine 282 each bind UDP-N-acetyl-alpha-D-glucosamine; that span reads TGG.

Belongs to the glycosyltransferase 28 family. MurG subfamily.

It localises to the cell inner membrane. It catalyses the reaction di-trans,octa-cis-undecaprenyl diphospho-N-acetyl-alpha-D-muramoyl-L-alanyl-D-glutamyl-meso-2,6-diaminopimeloyl-D-alanyl-D-alanine + UDP-N-acetyl-alpha-D-glucosamine = di-trans,octa-cis-undecaprenyl diphospho-[N-acetyl-alpha-D-glucosaminyl-(1-&gt;4)]-N-acetyl-alpha-D-muramoyl-L-alanyl-D-glutamyl-meso-2,6-diaminopimeloyl-D-alanyl-D-alanine + UDP + H(+). Its pathway is cell wall biogenesis; peptidoglycan biosynthesis. Its function is as follows. Cell wall formation. Catalyzes the transfer of a GlcNAc subunit on undecaprenyl-pyrophosphoryl-MurNAc-pentapeptide (lipid intermediate I) to form undecaprenyl-pyrophosphoryl-MurNAc-(pentapeptide)GlcNAc (lipid intermediate II). This chain is UDP-N-acetylglucosamine--N-acetylmuramyl-(pentapeptide) pyrophosphoryl-undecaprenol N-acetylglucosamine transferase, found in Synechococcus sp. (strain CC9902).